The chain runs to 317 residues: Ribosomal protein L11 methyltransferase (317 aa).

Threonine 158, glycine 179, aspartate 201, and asparagine 244 together coordinate S-adenosyl-L-methionine.

It belongs to the methyltransferase superfamily. PrmA family.

The protein localises to the cytoplasm. It carries out the reaction L-lysyl-[protein] + 3 S-adenosyl-L-methionine = N(6),N(6),N(6)-trimethyl-L-lysyl-[protein] + 3 S-adenosyl-L-homocysteine + 3 H(+). Methylates ribosomal protein L11. This chain is Ribosomal protein L11 methyltransferase, found in Streptococcus pyogenes serotype M1.